Here is a 232-residue protein sequence, read N- to C-terminus: 7-cyano-7-deazaguanine synthase (232 aa).

8-18 (FSGGQDSTTCL) is an ATP binding site. Residues C187, C196, C199, and C202 each coordinate Zn(2+).

Belongs to the QueC family. Zn(2+) is required as a cofactor.

It carries out the reaction 7-carboxy-7-deazaguanine + NH4(+) + ATP = 7-cyano-7-deazaguanine + ADP + phosphate + H2O + H(+). Its pathway is purine metabolism; 7-cyano-7-deazaguanine biosynthesis. Catalyzes the ATP-dependent conversion of 7-carboxy-7-deazaguanine (CDG) to 7-cyano-7-deazaguanine (preQ(0)). The sequence is that of 7-cyano-7-deazaguanine synthase from Vibrio parahaemolyticus serotype O3:K6 (strain RIMD 2210633).